A 169-amino-acid polypeptide reads, in one-letter code: CKLF-like MARVEL transmembrane domain-containing protein 2A (169 aa).

The next 4 membrane-spanning stretches (helical) occupy residues 40-60 (FWLS…ISAL), 69-89 (HPVL…FIFL), 98-118 (IPFV…CVFL), and 136-156 (YLTA…DMLL). Residues 40-162 (FWLSGHAVFK…DMLLQFQHFR (123 aa)) form the MARVEL domain.

It belongs to the chemokine-like factor family.

It localises to the membrane. This is CKLF-like MARVEL transmembrane domain-containing protein 2A (Cmtm2a) from Mus musculus (Mouse).